The following is a 237-amino-acid chain: Methylosome subunit pICln (237 aa).

Ser-2 is subject to N-acetylserine. Phosphoserine is present on residues Ser-102, Ser-144, Ser-193, Ser-195, Ser-198, and Ser-210. The tract at residues 135–159 (LHPDPEDEDSDDYDGEEYDVEAHEQ) is disordered. Residues 139-153 (PEDEDSDDYDGEEYD) are compositionally biased toward acidic residues. Thr-223 is subject to Phosphothreonine.

Belongs to the pICln (TC 1.A.47) family. In terms of assembly, component of the methylosome, a 20S complex containing at least PRMT5/SKB1, WDR77/MEP50 and CLNS1A/pICln. May mediate SNRPD1 and SNRPD3 methylation. Forms a 6S pICln-Sm complex composed of CLNS1A/pICln, SNRPD1, SNRPD2, SNRPE, SNRPF and SNRPG; ring-like structure where CLNS1A/pICln mimics additional Sm proteins and which is unable to assemble into the core snRNP. Interacts with LSM10 and LSM11.

The protein resides in the cytoplasm. It localises to the cytosol. Its subcellular location is the nucleus. It is found in the cytoskeleton. In terms of biological role, involved in both the assembly of spliceosomal snRNPs and the methylation of Sm proteins. Chaperone that regulates the assembly of spliceosomal U1, U2, U4 and U5 small nuclear ribonucleoproteins (snRNPs), the building blocks of the spliceosome, and thereby plays an important role in the splicing of cellular pre-mRNAs. Most spliceosomal snRNPs contain a common set of Sm proteins SNRPB, SNRPD1, SNRPD2, SNRPD3, SNRPE, SNRPF and SNRPG that assemble in a heptameric protein ring on the Sm site of the small nuclear RNA to form the core snRNP (Sm core). In the cytosol, the Sm proteins SNRPD1, SNRPD2, SNRPE, SNRPF and SNRPG are trapped in an inactive 6S pICln-Sm complex by the chaperone CLNS1A that controls the assembly of the core snRNP. Dissociation by the SMN complex of CLNS1A from the trapped Sm proteins and their transfer to an SMN-Sm complex triggers the assembly of core snRNPs and their transport to the nucleus. This is Methylosome subunit pICln (CLNS1A) from Homo sapiens (Human).